A 514-amino-acid chain; its full sequence is 2-isopropylmalate synthase (514 aa).

The region spanning 5-268 is the Pyruvate carboxyltransferase domain; sequence LIIFDTTLRD…DVGIDTTQIV (264 aa). Mn(2+)-binding residues include Asp-14, His-202, His-204, and Asn-239. Residues 395–514 form a regulatory domain region; sequence KFVSLSQRSE…KDDKLNPQRA (120 aa).

It belongs to the alpha-IPM synthase/homocitrate synthase family. LeuA type 1 subfamily. Homodimer. The cofactor is Mn(2+).

Its subcellular location is the cytoplasm. It carries out the reaction 3-methyl-2-oxobutanoate + acetyl-CoA + H2O = (2S)-2-isopropylmalate + CoA + H(+). Its pathway is amino-acid biosynthesis; L-leucine biosynthesis; L-leucine from 3-methyl-2-oxobutanoate: step 1/4. In terms of biological role, catalyzes the condensation of the acetyl group of acetyl-CoA with 3-methyl-2-oxobutanoate (2-ketoisovalerate) to form 3-carboxy-3-hydroxy-4-methylpentanoate (2-isopropylmalate). This chain is 2-isopropylmalate synthase, found in Burkholderia cenocepacia (strain HI2424).